A 188-amino-acid chain; its full sequence is ATP synthase subunit delta (188 aa).

The protein belongs to the ATPase delta chain family. F-type ATPases have 2 components, F(1) - the catalytic core - and F(0) - the membrane proton channel. F(1) has five subunits: alpha(3), beta(3), gamma(1), delta(1), epsilon(1). F(0) has three main subunits: a(1), b(2) and c(10-14). The alpha and beta chains form an alternating ring which encloses part of the gamma chain. F(1) is attached to F(0) by a central stalk formed by the gamma and epsilon chains, while a peripheral stalk is formed by the delta and b chains.

Its subcellular location is the cell inner membrane. Functionally, f(1)F(0) ATP synthase produces ATP from ADP in the presence of a proton or sodium gradient. F-type ATPases consist of two structural domains, F(1) containing the extramembraneous catalytic core and F(0) containing the membrane proton channel, linked together by a central stalk and a peripheral stalk. During catalysis, ATP synthesis in the catalytic domain of F(1) is coupled via a rotary mechanism of the central stalk subunits to proton translocation. Its function is as follows. This protein is part of the stalk that links CF(0) to CF(1). It either transmits conformational changes from CF(0) to CF(1) or is implicated in proton conduction. The sequence is that of ATP synthase subunit delta from Agrobacterium fabrum (strain C58 / ATCC 33970) (Agrobacterium tumefaciens (strain C58)).